A 609-amino-acid polypeptide reads, in one-letter code: Replication factor A protein 1 (609 aa).

Residues 130-152 are compositionally biased toward polar residues; that stretch reads QNEQNNASAPRTGISTSTNSFYG. Residues 130-166 are disordered; it reads QNEQNNASAPRTGISTSTNSFYGNNAAATAPAPPPMM. Positions 192 to 278 form a DNA-binding region, OB; the sequence is WTIRARVTNK…NEYELMFERD (87 aa). The C4-type zinc-finger motif lies at 477 to 498; sequence CPAADCNKKVFDQGGSWRCEKC.

The protein belongs to the replication factor A protein 1 family. As to quaternary structure, component of the heterotrimeric canonical replication protein A complex (RPA).

It localises to the nucleus. Functionally, as part of the replication protein A (RPA/RP-A), a single-stranded DNA-binding heterotrimeric complex, may play an essential role in DNA replication, recombination and repair. Binds and stabilizes single-stranded DNA intermediates, preventing complementary DNA reannealing and recruiting different proteins involved in DNA metabolism. In Schizosaccharomyces pombe (strain 972 / ATCC 24843) (Fission yeast), this protein is Replication factor A protein 1 (ssb1).